We begin with the raw amino-acid sequence, 406 residues long: MISLNSIFLLSLVGLSRAAPSRSETSPDRTIKPRAACTPTAGGSSSTDDVPAIQEAITSCGDGGTIVIPADTTYYLNSVLDFKGCSNCDFQVEGLLQFTSSTDYWNGKTAMISVSDIDGLKLRSVTGSGVIDGNGQESWDKFAEDSSYKRPTLLYITGGSNIEVSGLRQKNPPNVFISVKGDTSNAQFTSLTMDATSNSDNLPKNTDAFDIGASTYVTISSVAITNDDDCVAFKPGANYVTVENVSCTGSHGISVGSLGKSSDDTVQNVYARNITMINSSKAAGIKTYPSGGDHGLSTVKNATFEDFIVDGCDYAFQIQSCYGEDDTYCEENPGDAVLEGIVVKGFTGTTSDKEDPVVANLNCGSKGTCDVTISGFEVKAPSGDAKILCGNTPSDLGVTCSSGASG.

The signal sequence occupies residues M1 to A18. The tract at residues P20–D49 is disordered. PbH1 repeat units lie at residues T183–A213, S214–P235, A237–S257, V266–P289, V299–S320, and T368–G390. D228 (proton donor) is an active-site residue. N244 is a glycosylation site (N-linked (GlcNAc...) asparagine). Residue H251 is part of the active site. N273, N278, and N301 each carry an N-linked (GlcNAc...) asparagine glycan.

Belongs to the glycosyl hydrolase 28 family.

The protein resides in the secreted. Pectinolytic enzyme involved in the degradation of xylogalacturonan (xga), a galacturonan backbone heavily substituted with xylose, and which is one important component of the hairy regions of pectin. Activity requires a galacturonic acid backbone substituted with xylose. In Aspergillus flavus (strain ATCC 200026 / FGSC A1120 / IAM 13836 / NRRL 3357 / JCM 12722 / SRRC 167), this protein is Probable endo-xylogalacturonan hydrolase A (xghA).